Consider the following 398-residue polypeptide: Acetate kinase 1 (398 aa).

Asn9 lines the Mg(2+) pocket. Lys16 serves as a coordination point for ATP. Arg89 is a substrate binding site. The active-site Proton donor/acceptor is the Asp146. Residues 206-210 (HLGNG), 281-283 (DCR), and 329-333 (GIGEN) each bind ATP. Mg(2+) is bound at residue Glu384.

It belongs to the acetokinase family. Homodimer. It depends on Mg(2+) as a cofactor. Requires Mn(2+) as cofactor.

The protein localises to the cytoplasm. The catalysed reaction is acetate + ATP = acetyl phosphate + ADP. The protein operates within metabolic intermediate biosynthesis; acetyl-CoA biosynthesis; acetyl-CoA from acetate: step 1/2. In terms of biological role, catalyzes the formation of acetyl phosphate from acetate and ATP. Can also catalyze the reverse reaction. In Photobacterium profundum (strain SS9), this protein is Acetate kinase 1.